Here is a 192-residue protein sequence, read N- to C-terminus: Holliday junction branch migration complex subunit RuvA (192 aa).

The segment at 1-61 (MFEYLKGIVT…DTGITLYGFL (61 aa)) is domain I. Residues 62–137 (SLEDKELFLK…KLGDYVKKST (76 aa)) are domain II. A flexible linker region spans residues 137-140 (TAAA). Residues 141 to 192 (DLTPSLQDALLALVALGYTQKEVDRITPKLAKLPENTADGYVKEALALLLKK) form a domain III region.

The protein belongs to the RuvA family. In terms of assembly, homotetramer. Forms an RuvA(8)-RuvB(12)-Holliday junction (HJ) complex. HJ DNA is sandwiched between 2 RuvA tetramers; dsDNA enters through RuvA and exits via RuvB. An RuvB hexamer assembles on each DNA strand where it exits the tetramer. Each RuvB hexamer is contacted by two RuvA subunits (via domain III) on 2 adjacent RuvB subunits; this complex drives branch migration. In the full resolvosome a probable DNA-RuvA(4)-RuvB(12)-RuvC(2) complex forms which resolves the HJ.

The protein localises to the cytoplasm. Functionally, the RuvA-RuvB-RuvC complex processes Holliday junction (HJ) DNA during genetic recombination and DNA repair, while the RuvA-RuvB complex plays an important role in the rescue of blocked DNA replication forks via replication fork reversal (RFR). RuvA specifically binds to HJ cruciform DNA, conferring on it an open structure. The RuvB hexamer acts as an ATP-dependent pump, pulling dsDNA into and through the RuvAB complex. HJ branch migration allows RuvC to scan DNA until it finds its consensus sequence, where it cleaves and resolves the cruciform DNA. The sequence is that of Holliday junction branch migration complex subunit RuvA from Lactobacillus johnsonii (strain CNCM I-12250 / La1 / NCC 533).